We begin with the raw amino-acid sequence, 370 residues long: Neutral protease 2 homolog AFUB_070680 (370 aa).

A signal peptide spans M1–A19. Positions L20–R172 are excised as a propeptide. 2 disulfide bridges follow: C178–C250 and C257–C275. Position 300 (H300) interacts with Zn(2+). E301 is an active-site residue. Residues H304 and D315 each coordinate Zn(2+).

Belongs to the peptidase M35 family. Requires Zn(2+) as cofactor.

Its subcellular location is the secreted. The catalysed reaction is Preferential cleavage of bonds with hydrophobic residues in P1'. Also 3-Asn-|-Gln-4 and 8-Gly-|-Ser-9 bonds in insulin B chain.. Its function is as follows. Secreted metalloproteinase that allows assimilation of proteinaceous substrates. Shows high activities on basic nuclear substrates such as histone and protamine. May be involved in virulence. The polypeptide is Neutral protease 2 homolog AFUB_070680 (Aspergillus fumigatus (strain CBS 144.89 / FGSC A1163 / CEA10) (Neosartorya fumigata)).